A 118-amino-acid chain; its full sequence is Large ribosomal subunit protein uL18 (118 aa).

It belongs to the universal ribosomal protein uL18 family. Part of the 50S ribosomal subunit; part of the 5S rRNA/L5/L18/L25 subcomplex. Contacts the 5S and 23S rRNAs.

Its function is as follows. This is one of the proteins that bind and probably mediate the attachment of the 5S RNA into the large ribosomal subunit, where it forms part of the central protuberance. The protein is Large ribosomal subunit protein uL18 of Campylobacter hominis (strain ATCC BAA-381 / DSM 21671 / CCUG 45161 / LMG 19568 / NCTC 13146 / CH001A).